The primary structure comprises 552 residues: Dihydroxy-acid dehydratase (552 aa).

A Mg(2+)-binding site is contributed by aspartate 78. [2Fe-2S] cluster is bound at residue cysteine 119. Aspartate 120 and lysine 121 together coordinate Mg(2+). An N6-carboxylysine modification is found at lysine 121. Residue cysteine 191 coordinates [2Fe-2S] cluster. Glutamate 442 lines the Mg(2+) pocket. Serine 468 (proton acceptor) is an active-site residue.

It belongs to the IlvD/Edd family. Homodimer. [2Fe-2S] cluster serves as cofactor. It depends on Mg(2+) as a cofactor.

It carries out the reaction (2R)-2,3-dihydroxy-3-methylbutanoate = 3-methyl-2-oxobutanoate + H2O. The enzyme catalyses (2R,3R)-2,3-dihydroxy-3-methylpentanoate = (S)-3-methyl-2-oxopentanoate + H2O. Its pathway is amino-acid biosynthesis; L-isoleucine biosynthesis; L-isoleucine from 2-oxobutanoate: step 3/4. It participates in amino-acid biosynthesis; L-valine biosynthesis; L-valine from pyruvate: step 3/4. Functionally, functions in the biosynthesis of branched-chain amino acids. Catalyzes the dehydration of (2R,3R)-2,3-dihydroxy-3-methylpentanoate (2,3-dihydroxy-3-methylvalerate) into 2-oxo-3-methylpentanoate (2-oxo-3-methylvalerate) and of (2R)-2,3-dihydroxy-3-methylbutanoate (2,3-dihydroxyisovalerate) into 2-oxo-3-methylbutanoate (2-oxoisovalerate), the penultimate precursor to L-isoleucine and L-valine, respectively. The protein is Dihydroxy-acid dehydratase of Ruminiclostridium cellulolyticum (strain ATCC 35319 / DSM 5812 / JCM 6584 / H10) (Clostridium cellulolyticum).